The chain runs to 161 residues: Phosphopantetheine adenylyltransferase (161 aa).

Thr10 lines the substrate pocket. ATP-binding positions include Thr10–Phe11 and His18. The substrate site is built by Lys42, Leu74, and Arg88. ATP-binding positions include Gly89 to Arg91, Glu99, and Asn124 to Thr130.

Belongs to the bacterial CoaD family. Homohexamer. Mg(2+) serves as cofactor.

The protein resides in the cytoplasm. It carries out the reaction (R)-4'-phosphopantetheine + ATP + H(+) = 3'-dephospho-CoA + diphosphate. The protein operates within cofactor biosynthesis; coenzyme A biosynthesis; CoA from (R)-pantothenate: step 4/5. In terms of biological role, reversibly transfers an adenylyl group from ATP to 4'-phosphopantetheine, yielding dephospho-CoA (dPCoA) and pyrophosphate. The sequence is that of Phosphopantetheine adenylyltransferase from Photobacterium profundum (strain SS9).